The primary structure comprises 273 residues: Vitamin B12-binding protein (273 aa).

The first 18 residues, 1-18, serve as a signal peptide directing secretion; the sequence is MMKTLSSLLLLFSVSLQA. Positions 23–273 constitute a Fe/B12 periplasmic-binding domain; that stretch reads RVISLAPHAT…EHFASIEQKR (251 aa). A disulfide bond links cysteine 183 and cysteine 263.

Belongs to the BtuF family. In terms of assembly, the complex is composed of two ATP-binding proteins (BtuD), two transmembrane proteins (BtuC) and a solute-binding protein (BtuF).

It localises to the periplasm. Part of the ABC transporter complex BtuCDF involved in vitamin B12 import. Binds vitamin B12 and delivers it to the periplasmic surface of BtuC. In Vibrio vulnificus (strain CMCP6), this protein is Vitamin B12-binding protein.